We begin with the raw amino-acid sequence, 27 residues long: Histone H1.3, embryonic (27 aa).

In terms of domain architecture, H15 spans histidine 1–asparagine 27.

This sequence belongs to the histone H1/H5 family.

The protein localises to the nucleus. The protein resides in the chromosome. Histones H1 are necessary for the condensation of nucleosome chains into higher-order structures. This is Histone H1.3, embryonic from Parechinus angulosus (Angulate sea urchin).